The following is a 308-amino-acid chain: Porphobilinogen deaminase (308 aa).

Residue cysteine 241 is modified to S-(dipyrrolylmethanemethyl)cysteine.

Belongs to the HMBS family. In terms of assembly, monomer. It depends on dipyrromethane as a cofactor.

The enzyme catalyses 4 porphobilinogen + H2O = hydroxymethylbilane + 4 NH4(+). It participates in porphyrin-containing compound metabolism; protoporphyrin-IX biosynthesis; coproporphyrinogen-III from 5-aminolevulinate: step 2/4. Tetrapolymerization of the monopyrrole PBG into the hydroxymethylbilane pre-uroporphyrinogen in several discrete steps. The polypeptide is Porphobilinogen deaminase (Staphylococcus aureus (strain Mu50 / ATCC 700699)).